A 51-amino-acid polypeptide reads, in one-letter code: Large ribosomal subunit protein eL39-like (51 aa).

The protein belongs to the eukaryotic ribosomal protein eL39 family. As to quaternary structure, component of a male germ cell-specific 60S large ribosomal subunit (LSU), which contains RPL10L and RPL39L, instead of RPL10 and RPL39 paralogs. The composition of the rest of the complex is similar to classical ribosomes. Highly expressed in spermatocytes and spermatids. Highly expressed in embryonic stem cells.

Its subcellular location is the cytoplasm. Its function is as follows. Male germ cell-specific component of the ribosome, which is required for the formation of sperm and male fertility. Replaces the RPL39 paralog in the ribosome of male germ cells. The ribosome is a large ribonucleoprotein complex responsible for the synthesis of proteins in the cell. The male germ cell-specific ribosome displays a ribosomal polypeptide exit tunnel of distinct size and charge states compared with the classical ribosome. It is responsible for regulating the biosynthesis and folding of a subset of male germ-cell-specific proteins that are essential for the formation of sperm. The sequence is that of Large ribosomal subunit protein eL39-like from Mus musculus (Mouse).